The sequence spans 87 residues: Small ribosomal subunit protein bS21 (87 aa).

The segment covering 35 to 52 has biased composition (basic and acidic residues); sequence HYEKPSEKKAREKAEAVR. Residues 35-87 form a disordered region; that stretch reads HYEKPSEKKAREKAEAVRRARKLARKKLQREGLLPSKPKPAFGADRRPSAAAR. Positions 53-62 are enriched in basic residues; that stretch reads RARKLARKKL. The segment covering 78–87 has biased composition (basic and acidic residues); that stretch reads ADRRPSAAAR.

The polypeptide is Small ribosomal subunit protein bS21 (Rhodopseudomonas palustris (strain ATCC BAA-98 / CGA009)).